Reading from the N-terminus, the 179-residue chain is MAVSRITRWRLMSMFFGIKCLFLIVALGVLVKNSFTIQNIQSTPSSTPIVEFQKVSKCCACLEKWIGHQCSCYFISKEEKSWKGSREFCASQNSSLLQLQTRNELSFMSSSQAFFWIGIHYNEERSAWLWEDGTFPSKDLFPEFSKFRQDHCIGYSISREISSESCENKNRFICKQLPT.

The Cytoplasmic portion of the chain corresponds to 1-10; the sequence is MAVSRITRWR. The helical; Signal-anchor for type II membrane protein transmembrane segment at 11–31 threads the bilayer; the sequence is LMSMFFGIKCLFLIVALGVLV. Topologically, residues 32–179 are extracellular; that stretch reads KNSFTIQNIQ…NRFICKQLPT (148 aa). Disulfide bonds link Cys58/Cys70, Cys61/Cys72, Cys89/Cys174, and Cys152/Cys166. In terms of domain architecture, C-type lectin spans 68–175; that stretch reads HQCSCYFISK…CENKNRFICK (108 aa). Asn93 carries N-linked (GlcNAc...) asparagine glycosylation.

Can form disulfide-bonded heterodimer with NKG2 family members KLRC1 and KLRC2. KLRD1-KLRC1 heterodimer interacts with peptide-bound MHC-E-B2M heterotrimeric complex. KLRD1 plays a prominent role in directly interacting with MHC-E. KLRD1-KLRC1 interacts with much higher affinity with peptide-bound MHC-E-B2M than KLRD1-KLRC2. Interacts with the adapter protein TYROBP/DAP12; this interaction is required for cell surface expression and cell activation.

It is found in the cell membrane. Its function is as follows. Immune receptor involved in self-nonself discrimination. In complex with KLRC1 or KLRC2 on cytotoxic and regulatory lymphocyte subsets, recognizes non-classical major histocompatibility (MHC) class Ib molecule MHC-E loaded with self-peptides derived from the signal sequence of classical MHC class Ia and non-classical MHC class Ib molecules. Enables cytotoxic cells to monitor the expression of MHC class I molecules in healthy cells and to tolerate self. Primarily functions as a ligand binding subunit as it lacks the capacity to signal. In terms of biological role, KLRD1-KLRC1 acts as an immune inhibitory receptor. Key inhibitory receptor on natural killer (NK) cells that regulates their activation and effector functions. Dominantly counteracts T cell receptor signaling on a subset of memory/effector CD8-positive T cells as part of an antigen-driven response to avoid autoimmunity. On intraepithelial CD8-positive gamma-delta regulatory T cells triggers TGFB1 secretion, which in turn limits the cytotoxic programming of intraepithelial CD8-positive alpha-beta T cells, distinguishing harmless from pathogenic antigens. In MHC-E-rich tumor microenvironment, acts as an immune inhibitory checkpoint and may contribute to progressive loss of effector functions of NK cells and tumor-specific T cells, a state known as cell exhaustion. Upon MHC-E-peptide binding, transmits intracellular signals through KLRC1 immunoreceptor tyrosine-based inhibition motifs (ITIMs) by recruiting INPP5D/SHIP-1 and INPPL1/SHIP-2 tyrosine phosphatases to ITIMs, and ultimately opposing signals transmitted by activating receptors through dephosphorylation of proximal signaling molecules. KLRD1-KLRC2 acts as an immune activating receptor. On cytotoxic lymphocyte subsets recognizes MHC-E loaded with signal sequence-derived peptides from non-classical MHC class Ib MHC-G molecules, likely playing a role in the generation and effector functions of adaptive NK cells and in maternal-fetal tolerance during pregnancy. Regulates the effector functions of terminally differentiated cytotoxic lymphocyte subsets, and in particular may play a role in adaptive NK cell response to viral infection. Upon MHC-E-peptide binding, transmits intracellular signals via the adapter protein TYROBP/DAP12, triggering the phosphorylation of proximal signaling molecules and cell activation. The chain is Natural killer cells antigen CD94 (Klrd1) from Rattus norvegicus (Rat).